We begin with the raw amino-acid sequence, 444 residues long: C4-dicarboxylate transport protein 2 (444 aa).

The next 6 membrane-spanning stretches (helical) occupy residues 23–43, 61–81, 95–115, 162–182, 198–218, and 236–256; these read ILYV…WLWP, LIKM…IAHI, LVYF…VANV, GEIL…MGLG, AMFG…FGAM, and LIAT…GIIA.

This sequence belongs to the dicarboxylate/amino acid:cation symporter (DAACS) (TC 2.A.23) family.

The protein resides in the cell inner membrane. Functionally, responsible for the transport of dicarboxylates such as succinate, fumarate, and malate from the periplasm across the membrane. This chain is C4-dicarboxylate transport protein 2, found in Bradyrhizobium diazoefficiens (strain JCM 10833 / BCRC 13528 / IAM 13628 / NBRC 14792 / USDA 110).